An 86-amino-acid polypeptide reads, in one-letter code: Defensin-like protein a (86 aa).

The first 23 residues, 1-23 (MRCSVLFVVSYVIMSLLISHVQG), serve as a signal peptide directing secretion. 4 disulfide bridges follow: cysteine 33/cysteine 81, cysteine 43/cysteine 67, cysteine 51/cysteine 76, and cysteine 65/cysteine 78.

It belongs to the DEFL family. As to expression, expressed specifically in anthers.

Its subcellular location is the secreted. Its function is as follows. Involved in self-incompatibility. This Arabidopsis lyrata (Lyre-leaved rock-cress) protein is Defensin-like protein a (SCRa).